The chain runs to 125 residues: MRHYEIVLMVHPDQSEQVSRMIERYSTVITSAQGKIHRLEDWGRRQLSYPIKKLHKAHYVLINLEASQKVMDELSKYLRFNEAIIRSMIMRVKHIVTEASPMVKTKDDNLVTEINKYSEEKNSEL.

It belongs to the bacterial ribosomal protein bS6 family.

In terms of biological role, binds together with bS18 to 16S ribosomal RNA. This chain is Small ribosomal subunit protein bS6, found in Baumannia cicadellinicola subsp. Homalodisca coagulata.